The chain runs to 450 residues: UPF0236 protein in vanSb 3'region (450 aa).

It belongs to the UPF0236 family.

The polypeptide is UPF0236 protein in vanSb 3'region (Streptococcus gallolyticus (Streptococcus bovis biotype I)).